The sequence spans 99 residues: Small ribosomal subunit protein bS16 (99 aa).

Residues 80–99 are disordered; it reads PPRQQNEAKRETAETAQPEA.

It belongs to the bacterial ribosomal protein bS16 family.

The chain is Small ribosomal subunit protein bS16 from Thermomicrobium roseum (strain ATCC 27502 / DSM 5159 / P-2).